Reading from the N-terminus, the 281-residue chain is Probable endonuclease 4 (281 aa).

Residues histidine 69, histidine 109, glutamate 145, aspartate 179, histidine 182, histidine 216, aspartate 229, histidine 231, and glutamate 261 each coordinate Zn(2+).

The protein belongs to the AP endonuclease 2 family. Zn(2+) serves as cofactor.

It catalyses the reaction Endonucleolytic cleavage to 5'-phosphooligonucleotide end-products.. Endonuclease IV plays a role in DNA repair. It cleaves phosphodiester bonds at apurinic or apyrimidinic (AP) sites, generating a 3'-hydroxyl group and a 5'-terminal sugar phosphate. The protein is Probable endonuclease 4 of Nautilia profundicola (strain ATCC BAA-1463 / DSM 18972 / AmH).